A 500-amino-acid chain; its full sequence is Glycogen synthase (500 aa).

Position 20 (lysine 20) interacts with ADP-alpha-D-glucose.

This sequence belongs to the glycosyltransferase 1 family. Bacterial/plant glycogen synthase subfamily.

The catalysed reaction is [(1-&gt;4)-alpha-D-glucosyl](n) + ADP-alpha-D-glucose = [(1-&gt;4)-alpha-D-glucosyl](n+1) + ADP + H(+). It participates in glycan biosynthesis; glycogen biosynthesis. Its function is as follows. Synthesizes alpha-1,4-glucan chains using ADP-glucose. This Desulforudis audaxviator (strain MP104C) protein is Glycogen synthase.